Consider the following 304-residue polypeptide: Granaticin polyketide synthase bifunctional cyclase/dehydratase (304 aa).

It functions in the pathway antifungal biosynthesis; monensin biosynthesis. Functionally, is needed for correct cyclization of the oligoketide leading to isochromanequinone formation. The protein is Granaticin polyketide synthase bifunctional cyclase/dehydratase of Streptomyces virginiae (Streptomyces cinnamonensis).